The sequence spans 92 residues: Small ribosomal subunit protein bS20 (92 aa).

The interval 1-25 is disordered; it reads MANSAQARKRARQAAKANSHNSALR.

The protein belongs to the bacterial ribosomal protein bS20 family.

Its function is as follows. Binds directly to 16S ribosomal RNA. This is Small ribosomal subunit protein bS20 from Paraburkholderia phymatum (strain DSM 17167 / CIP 108236 / LMG 21445 / STM815) (Burkholderia phymatum).